A 524-amino-acid chain; its full sequence is Protopine 6-monooxygenase (524 aa).

Helical transmembrane passes span 4-24 (LMLAYLFPISVASIIAFVFLY), 232-252 (LASLSMFSDFAPLLGFVDIFQ), and 319-339 (MIMGGTDTTAVSLTWIISLLM). Cys462 is a binding site for heme.

It belongs to the cytochrome P450 family. Heme is required as a cofactor.

The protein resides in the endoplasmic reticulum membrane. It catalyses the reaction protopine + reduced [NADPH--hemoprotein reductase] + O2 = 6-hydroxyprotopine + oxidized [NADPH--hemoprotein reductase] + H2O + H(+). The protein operates within alkaloid biosynthesis. Catalyzes the conversion of protopine and allocryptopine to dihydrosanguinarine and dihydrochelerythrine, respectively, in the biosynthesis of isoquinoline alkaloid sanguinarine. The sequence is that of Protopine 6-monooxygenase (CYP82N2v2) from Eschscholzia californica (California poppy).